Consider the following 163-residue polypeptide: Putative 4-hydroxy-4-methyl-2-oxoglutarate aldolase (163 aa).

Substrate contacts are provided by residues 76–79 (GDML) and arginine 98. An a divalent metal cation-binding site is contributed by aspartate 99.

It belongs to the class II aldolase/RraA-like family. Homotrimer. It depends on a divalent metal cation as a cofactor.

The enzyme catalyses 4-hydroxy-4-methyl-2-oxoglutarate = 2 pyruvate. It carries out the reaction oxaloacetate + H(+) = pyruvate + CO2. Functionally, catalyzes the aldol cleavage of 4-hydroxy-4-methyl-2-oxoglutarate (HMG) into 2 molecules of pyruvate. Also contains a secondary oxaloacetate (OAA) decarboxylase activity due to the common pyruvate enolate transition state formed following C-C bond cleavage in the retro-aldol and decarboxylation reactions. The sequence is that of Putative 4-hydroxy-4-methyl-2-oxoglutarate aldolase from Pseudomonas putida (strain ATCC 47054 / DSM 6125 / CFBP 8728 / NCIMB 11950 / KT2440).